A 367-amino-acid chain; its full sequence is VDFNVPIKEGKVKNTTRIQGAIPTLKKILEQNPKNVTLMSHMGRPDGKRVEKDSLKIVVPKLEELLGTKVNFVNDCVGSEALEASNAGNGQINLLENLRFHIQEEGKGLDANGAKIKADKESVKKFRKELSSLGDIYVNDAFGTAHRAHSSMVGIDHKIRVAGYLMKKELDYFAKALETPQRPFLVILGGAKVADKIQLIKSMLDKVDEMIIGGGMAFTFLKKYIMFPIGKSLFDEEGYKIVDEIIAKAKEKNVKIHLPTDFVCGTGLDASSPVALHDLKSGIPDGWLGLDAGQLTQRENADAIGRAKTIVWNGPQGAFEIEQFKNGSVSMLNALVKQTQNGATTIVGGGDTVNLVGANKANDKLSH.

Val1, Asp2, Phe3, Asn4, Arg17, Ser40, His41, Gly43, Arg44, Leu98, Arg99, His146, and Arg147 together coordinate (2R)-3-phosphoglycerate. Residue Gly190 coordinates ADP. Residue Gly190 participates in CDP binding. The AMP site is built by Ala191 and Lys192. Ala191 contacts ATP. Position 191 (Ala191) interacts with Mg(2+). Residues Ala194 and Asp195 each coordinate Mg(2+). Asp195 provides a ligand contact to CDP. Lys196 provides a ligand contact to AMP. Residue Lys196 participates in ATP binding. Gly214 serves as a coordination point for ADP. Residue Gly214 coordinates CDP. Residues Gly215 and Gly289 each contribute to the AMP site. Residues Gly215 and Gly289 each coordinate ATP. Positions 314 and 319 each coordinate CDP. Phe319 is an ADP binding site. An AMP-binding site is contributed by Glu320. ATP-binding residues include Glu320, Asp351, and Thr352. Asp351 lines the Mg(2+) pocket.

It belongs to the phosphoglycerate kinase family. In terms of assembly, monomer. Requires Mg(2+) as cofactor.

The catalysed reaction is (2R)-3-phosphoglycerate + ATP = (2R)-3-phospho-glyceroyl phosphate + ADP. Its pathway is carbohydrate degradation; glycolysis; pyruvate from D-glyceraldehyde 3-phosphate: step 2/5. The sequence is that of Phosphoglycerate kinase (PGK) from Paramecium primaurelia.